The chain runs to 699 residues: Elongation factor G (699 aa).

Positions 8 to 289 constitute a tr-type G domain; that stretch reads ERYRNIGISA…AVVEYMPAPT (282 aa). Residues 17–24, 88–92, and 142–145 contribute to the GTP site; these read AHIDAGKT, DTPGH, and NKMD.

It belongs to the TRAFAC class translation factor GTPase superfamily. Classic translation factor GTPase family. EF-G/EF-2 subfamily.

The protein localises to the cytoplasm. Functionally, catalyzes the GTP-dependent ribosomal translocation step during translation elongation. During this step, the ribosome changes from the pre-translocational (PRE) to the post-translocational (POST) state as the newly formed A-site-bound peptidyl-tRNA and P-site-bound deacylated tRNA move to the P and E sites, respectively. Catalyzes the coordinated movement of the two tRNA molecules, the mRNA and conformational changes in the ribosome. This is Elongation factor G from Variovorax paradoxus (strain S110).